The following is a 354-amino-acid chain: Selenide, water dikinase (354 aa).

Sec21 is an active-site residue. A non-standard amino acid (selenocysteine) is located at residue Sec21. ATP contacts are provided by residues Lys24 and 51-53 (TSD). Residue Asp54 participates in Mg(2+) binding. Residues Asp71, Asp94, and 141-143 (GHT) contribute to the ATP site. Asp94 serves as a coordination point for Mg(2+). Asp229 lines the Mg(2+) pocket.

The protein belongs to the selenophosphate synthase 1 family. Class I subfamily. As to quaternary structure, homodimer. The cofactor is Mg(2+).

It carries out the reaction hydrogenselenide + ATP + H2O = selenophosphate + AMP + phosphate + 2 H(+). Synthesizes selenophosphate from selenide and ATP. This is Selenide, water dikinase from Treponema denticola (strain ATCC 35405 / DSM 14222 / CIP 103919 / JCM 8153 / KCTC 15104).